We begin with the raw amino-acid sequence, 405 residues long: Deoxyguanosinetriphosphate triphosphohydrolase-like protein (405 aa).

The HD domain occupies 75 to 219 (RLTHTIEVAQ…AAIADDIAYN (145 aa)).

It belongs to the dGTPase family. Type 2 subfamily.

The polypeptide is Deoxyguanosinetriphosphate triphosphohydrolase-like protein (Rhizobium etli (strain CIAT 652)).